A 123-amino-acid chain; its full sequence is Defensin beta 118 (123 aa).

Positions 1–19 are cleaved as a signal peptide; sequence MKLLLLALPVLVLLPQVIP. Disulfide bonds link C27–C54, C34–C48, and C38–C55. The propeptide occupies 65–123; it reads VPMTSPTPLSDSTPGIIDDILTVRFTTDYFEVSSKKDMVEESEAGRGTETSLPNVHHSS. Positions 100 to 110 are enriched in basic and acidic residues; it reads KDMVEESEAGR. A disordered region spans residues 100-123; sequence KDMVEESEAGRGTETSLPNVHHSS. Residues 112-123 show a composition bias toward polar residues; sequence TETSLPNVHHSS.

It belongs to the beta-defensin family. The three-dimensional structure formed by the three intramolecular disulfide bridges is indispensable for antimicrobial activity.

The protein resides in the secreted. Host defense peptide that exhibits antimicrobial activity against both Gram-negative bacteria, such as E.coli and S.typhimurium, and Gram-positive bacteria, such as S.aureus and B.subtilis. Inhibits cell adhesion of E.coli on intestinal epithelial enterocytes. Causes rapid permeabilization of both the outer and inner membrane of E.coli, leading to morphological alterations on the bacterial surface. Binds to bacterial lipopolysaccharides (LPS) with high affinity, and may thereby be involved in immunoregulation through LPS neutralization. May contribute to epididymal innate immunity and protect the sperm against attack by microorganisms. The protein is Defensin beta 118 (DEFB118) of Pan troglodytes (Chimpanzee).